A 448-amino-acid polypeptide reads, in one-letter code: Tubulin beta chain (448 aa).

GTP contacts are provided by glutamine 11, glutamate 69, serine 138, glycine 142, threonine 143, glycine 144, asparagine 204, and asparagine 226. Glutamate 69 is a binding site for Mg(2+). The segment at tyrosine 425–glutamate 448 is disordered. Over residues glutamate 432 to glutamate 448 the composition is skewed to acidic residues.

Belongs to the tubulin family. Dimer of alpha and beta chains. A typical microtubule is a hollow water-filled tube with an outer diameter of 25 nm and an inner diameter of 15 nM. Alpha-beta heterodimers associate head-to-tail to form protofilaments running lengthwise along the microtubule wall with the beta-tubulin subunit facing the microtubule plus end conferring a structural polarity. Microtubules usually have 13 protofilaments but different protofilament numbers can be found in some organisms and specialized cells. It depends on Mg(2+) as a cofactor.

Its subcellular location is the cytoplasm. The protein localises to the cytoskeleton. Functionally, tubulin is the major constituent of microtubules, a cylinder consisting of laterally associated linear protofilaments composed of alpha- and beta-tubulin heterodimers. Microtubules grow by the addition of GTP-tubulin dimers to the microtubule end, where a stabilizing cap forms. Below the cap, tubulin dimers are in GDP-bound state, owing to GTPase activity of alpha-tubulin. The sequence is that of Tubulin beta chain (benR) from Aspergillus parasiticus.